The chain runs to 212 residues: uncharacterized protein (212 aa).

Residues G53 and E74 each contribute to the S-adenosyl-L-methionine site.

Belongs to the methyltransferase superfamily. YrrT family.

Its function is as follows. Could be a S-adenosyl-L-methionine-dependent methyltransferase. This is an uncharacterized protein from Exiguobacterium sibiricum (strain DSM 17290 / CCUG 55495 / CIP 109462 / JCM 13490 / 255-15).